Consider the following 333-residue polypeptide: Mitochondrial glycine transporter (333 aa).

Positions 1–25 (MTNAATDKSVASVARDVSTGKPGKS) are disordered. Solcar repeat units follow at residues 26-109 (PDAA…MRAA), 127-220 (LLPM…FKND), and 236-319 (RSSV…LIKS). A run of 6 helical transmembrane segments spans residues 32-57 (LLSG…TRLQ), 84-110 (GAVP…RAAV), 133-158 (LATG…TRFE), 195-218 (GSVA…EGFK), 240-266 (INSS…KTRL), and 294-312 (GLSL…SWCI).

It belongs to the mitochondrial carrier (TC 2.A.29) family. SLC25A38 subfamily.

It localises to the mitochondrion inner membrane. The catalysed reaction is glycine(in) = glycine(out). Functionally, mitochondrial glycine transporter that imports glycine into the mitochondrial matrix. Plays an important role in providing glycine for the first enzymatic step in heme biosynthesis, the condensation of glycine with succinyl-CoA to produce 5-aminolevulinate (ALA) in the mitochondrial matrix. This chain is Mitochondrial glycine transporter, found in Scheffersomyces stipitis (strain ATCC 58785 / CBS 6054 / NBRC 10063 / NRRL Y-11545) (Yeast).